Here is a 379-residue protein sequence, read N- to C-terminus: Lipid-A-disaccharide synthase (379 aa).

It belongs to the LpxB family.

It carries out the reaction a lipid X + a UDP-2-N,3-O-bis[(3R)-3-hydroxyacyl]-alpha-D-glucosamine = a lipid A disaccharide + UDP + H(+). It functions in the pathway bacterial outer membrane biogenesis; LPS lipid A biosynthesis. In terms of biological role, condensation of UDP-2,3-diacylglucosamine and 2,3-diacylglucosamine-1-phosphate to form lipid A disaccharide, a precursor of lipid A, a phosphorylated glycolipid that anchors the lipopolysaccharide to the outer membrane of the cell. The chain is Lipid-A-disaccharide synthase from Vibrio parahaemolyticus serotype O3:K6 (strain RIMD 2210633).